A 229-amino-acid polypeptide reads, in one-letter code: ATP synthase subunit a (229 aa).

A run of 6 helical transmembrane segments spans residues 25 to 45 (ADAI…SILA), 82 to 102 (FFPL…IGLI), 111 to 131 (NINT…IVGI), 142 to 162 (FLGP…IGHF), 181 to 201 (LVLM…MMLM), and 202 to 222 (GVLV…IYIQ).

This sequence belongs to the ATPase A chain family. In terms of assembly, F-type ATPases have 2 components, CF(1) - the catalytic core - and CF(0) - the membrane proton channel. CF(1) has five subunits: alpha(3), beta(3), gamma(1), delta(1), epsilon(1). CF(0) has three main subunits: a(1), b(2) and c(9-12). The alpha and beta chains form an alternating ring which encloses part of the gamma chain. CF(1) is attached to CF(0) by a central stalk formed by the gamma and epsilon chains, while a peripheral stalk is formed by the delta and b chains.

The protein localises to the cell inner membrane. Functionally, key component of the proton channel; it plays a direct role in the translocation of protons across the membrane. This chain is ATP synthase subunit a, found in Geotalea daltonii (strain DSM 22248 / JCM 15807 / FRC-32) (Geobacter daltonii).